Here is a 460-residue protein sequence, read N- to C-terminus: GTPase Der (460 aa).

2 consecutive EngA-type G domains span residues 3-167 and 189-364; these read FTFA…PEPD and IRVA…AVWN. Residues 9–16, 56–60, 119–122, 195–202, 242–246, and 307–310 contribute to the GTP site; these read GRPNVGKS, DTAGL, NKSE, GRPNAGKS, and NKWD. In terms of domain architecture, KH-like spans 365-449; that stretch reads TRVPTAALNR…PVRIMLREKA (85 aa).

This sequence belongs to the TRAFAC class TrmE-Era-EngA-EngB-Septin-like GTPase superfamily. EngA (Der) GTPase family. In terms of assembly, associates with the 50S ribosomal subunit.

Functionally, GTPase that plays an essential role in the late steps of ribosome biogenesis. The polypeptide is GTPase Der (Rhodopseudomonas palustris (strain BisB5)).